We begin with the raw amino-acid sequence, 145 residues long: Hemoglobin subunit beta (145 aa).

The Globin domain maps to 1 to 145 (MLTAEEKAAV…VANALAHRYH (145 aa)). A Phosphothreonine modification is found at Thr11. At Ser43 the chain carries Phosphoserine. Lys58 is subject to N6-acetyllysine. His62 lines the heme b pocket. Lys81 carries the post-translational modification N6-acetyllysine. His91 is a binding site for heme b. Cys92 carries the post-translational modification S-nitrosocysteine.

It belongs to the globin family. In terms of assembly, heterotetramer of two alpha chains and two beta chains. As to expression, red blood cells.

Its function is as follows. Involved in oxygen transport from the lung to the various peripheral tissues. Functions as an endogenous inhibitor of enkephalin-degrading enzymes such as DPP3, and may thereby play a role as a regulator of pain and inflammation. This chain is Hemoglobin subunit beta (HBB), found in Bos taurus (Bovine).